The chain runs to 90 residues: Small ribosomal subunit protein uS15 (90 aa).

The protein belongs to the universal ribosomal protein uS15 family. In terms of assembly, part of the 30S ribosomal subunit. Forms a bridge to the 50S subunit in the 70S ribosome, contacting the 23S rRNA.

Functionally, one of the primary rRNA binding proteins, it binds directly to 16S rRNA where it helps nucleate assembly of the platform of the 30S subunit by binding and bridging several RNA helices of the 16S rRNA. In terms of biological role, forms an intersubunit bridge (bridge B4) with the 23S rRNA of the 50S subunit in the ribosome. In Campylobacter lari (strain RM2100 / D67 / ATCC BAA-1060), this protein is Small ribosomal subunit protein uS15.